Reading from the N-terminus, the 287-residue chain is MNFFCKEKRQAYVELMRINKPIGTLLLLWPTLWALWIAAQGFPDLGVLIVFSAGVFLMRSAGCVINDFADRNIDGFVERTKHRPLPSGRATSTEAIILFFILAIVSFLLVLTQNSLTIQLSFAGLLLAFAYPFMKRFTQLPQLVLGLAFSWSIPMAFAAQANALPAVVWIIFAVNIIWTIAYDTLYAMVDREDDLKIGVKSTAILFASNDKIIIALLQLTSLILLSLLGWLEDLNWIYFIALLVVGGLFLRQQLQIKNREKTACFKAFLDNNYVGFVIFAGLFLGYL.

Helical transmembrane passes span 22–42 (IGTLLLLWPTLWALWIAAQGF), 45–65 (LGVLIVFSAGVFLMRSAGCVI), 91–111 (TSTEAIILFFILAIVSFLLVL), 114–134 (NSLTIQLSFAGLLLAFAYPFM), 139–159 (QLPQLVLGLAFSWSIPMAFAA), 161–181 (ANALPAVVWIIFAVNIIWTIA), 212–232 (IIIALLQLTSLILLSLLGWLE), 236–256 (WIYFIALLVVGGLFLRQQLQI), and 267–287 (AFLDNNYVGFVIFAGLFLGYL).

It belongs to the UbiA prenyltransferase family. The cofactor is Mg(2+).

The protein resides in the cell inner membrane. It catalyses the reaction all-trans-octaprenyl diphosphate + 4-hydroxybenzoate = 4-hydroxy-3-(all-trans-octaprenyl)benzoate + diphosphate. Its pathway is cofactor biosynthesis; ubiquinone biosynthesis. Its function is as follows. Catalyzes the prenylation of para-hydroxybenzoate (PHB) with an all-trans polyprenyl group. Mediates the second step in the final reaction sequence of ubiquinone-8 (UQ-8) biosynthesis, which is the condensation of the polyisoprenoid side chain with PHB, generating the first membrane-bound Q intermediate 3-octaprenyl-4-hydroxybenzoate. The polypeptide is 4-hydroxybenzoate octaprenyltransferase (Psychromonas ingrahamii (strain DSM 17664 / CCUG 51855 / 37)).